The primary structure comprises 389 residues: Leucine aminopeptidase 1 (389 aa).

The first 18 residues, 1–18, serve as a signal peptide directing secretion; the sequence is MKSAALLLPLYTAAFAAA. A propeptide spanning residues 19–89 is cleaved from the precursor; sequence AFHHEHAQAV…TLNHRINAES (71 aa). N-linked (GlcNAc...) asparagine glycans are attached at residues asparagine 99, asparagine 146, and asparagine 156. Zn(2+)-binding residues include histidine 188, aspartate 207, glutamate 246, and aspartate 273. Residues cysteine 322 and cysteine 326 are joined by a disulfide bond. Residue histidine 355 coordinates Zn(2+).

Belongs to the peptidase M28 family. M28E subfamily. As to quaternary structure, monomer. The cofactor is Zn(2+).

Its subcellular location is the secreted. Its function is as follows. Extracellular aminopeptidase that allows assimilation of proteinaceous substrates. This chain is Leucine aminopeptidase 1 (lap1), found in Pyrenophora tritici-repentis (strain Pt-1C-BFP) (Wheat tan spot fungus).